A 1482-amino-acid chain; its full sequence is Cystic fibrosis transmembrane conductance regulator (1482 aa).

At 1 to 77 the chain is on the cytoplasmic side; that stretch reads MQKSPLERAS…KLINALRRCF (77 aa). Residues 78–98 form a helical membrane-spanning segment; that stretch reads FWRFVFYGILLYLGEVTKAVQ. One can recognise an ABC transmembrane type-1 1 domain in the interval 81–365; that stretch reads FVFYGILLYL…WAVQTWYDSL (285 aa). Residues 99 to 122 lie on the Extracellular side of the membrane; the sequence is PLLLGRIIASYDPDNKVERSIAIY. Residues 123-146 form a helical membrane-spanning segment; that stretch reads LAIGLCLLFIVRTLLLHPAIFGLH. At 147-195 the chain is on the cytoplasmic side; the sequence is HMGMQMRIAMFSLIYKKTLKLSSRVLDKISIGQLVSLLSNNLNKFDEGL. The chain crosses the membrane as a helical span at residues 196–216; sequence ALAHFVWIAPLQVTLLMGLIW. Over 217-222 the chain is Extracellular; sequence DLLQAS. A helical transmembrane segment spans residues 223–243; sequence AFCGLAFLIIVALGQAGLGRM. The Cytoplasmic portion of the chain corresponds to 244–298; the sequence is MMKYRDKRAGKINERLVITSEMIENIQSVKAYCWEEAMEKMIENLRQIELRLTRK. The helical transmembrane segment at 299–319 threads the bilayer; it reads AAYVRYFNSAAFFFSGFFVVF. Residues 320 to 339 are Extracellular-facing; it reads LSVLPYAMLKGIILRKIFTT. Residues 340 to 358 traverse the membrane as a helical segment; it reads ISFCIVLRMAVTRQFPWAV. The Cytoplasmic portion of the chain corresponds to 359 to 858; it reads QTWYDSLGAI…YLRYVTVHKS (500 aa). ATP is bound by residues W401, S434, 458–465, and Q493; that span reads GSTGAGKT. Residues 423–646 form the ABC transporter 1 domain; sequence NGDNSLFFSN…RPDFSSELMG (224 aa). C524 carries the S-palmitoyl cysteine lipid modification. Residues S549 and S660 each carry the phosphoserine modification. Positions 654–831 are disordered R region; that stretch reads SAERRNSILT…EEINEEDLKE (178 aa). S670 carries the post-translational modification Phosphoserine; by PKA. S685 is modified (phosphoserine). K687 participates in a covalent cross-link: Glycyl lysine isopeptide (Lys-Gly) (interchain with G-Cter in ubiquitin). A phosphoserine mark is found at S699 and S711. Position 716 is a phosphothreonine (T716). A phosphoserine mark is found at S736, S767, S790, S795, and S813. A helical transmembrane segment spans residues 859–879; that stretch reads LIFVLIWCLVVFLAEVAVSLV. Residues 859 to 1156 enclose the ABC transmembrane type-1 2 domain; it reads LIFVLIWCLV…AVNSSIDVDS (298 aa). The Extracellular segment spans residues 880-919; sequence VLYLLRTSSLQDKGNNTTVNANSSYGVIVTNTSSYYLLYI. N894, N895, N901, and N910 each carry an N-linked (GlcNAc...) asparagine glycan. A discontinuously helical transmembrane segment spans residues 920–940; it reads YVGIADSLFALAIFRGLPLVH. At 941 to 991 the chain is on the cytoplasmic side; the sequence is TLIKVSKTLHHKMLRSILQAPMSTFNTLKAGRILNRFSKDIAILDDLLPLT. Residues 992–1012 form a helical membrane-spanning segment; sequence MFDFIQLLLIVIGAVVVVSVL. Topologically, residues 1013 to 1014 are extracellular; it reads QP. A helical transmembrane segment spans residues 1015 to 1035; that stretch reads YIFLATVPVIAAFIILRAYFL. The Cytoplasmic portion of the chain corresponds to 1036-1096; sequence HTSQQLKQLE…TANWFLYLST (61 aa). The helical transmembrane segment at 1097–1117 threads the bilayer; that stretch reads LRWFQMRIEIIFVIFFIAVTF. Topologically, residues 1118 to 1131 are extracellular; the sequence is VSILTTGEGEGTIG. A helical transmembrane segment spans residues 1132–1152; the sequence is IILTLAMNIMNTLQWAVNSSI. Over 1153–1482 the chain is Cytoplasmic; that stretch reads DVDSLMRSVS…TEEEVQETRL (330 aa). The 234-residue stretch at 1212-1445 folds into the ABC transporter 2 domain; it reads MTVKDLTAKY…KSLFRQAISP (234 aa). Residues Y1221 and 1246 to 1253 each bind ATP; that span reads GRTGSGKS. Residues 1388-1482 are interaction with GORASP2; sequence RTLKQAFADC…TEEEVQETRL (95 aa). C1397 carries S-palmitoyl cysteine lipidation. A compositionally biased stretch (basic residues) spans 1454 to 1463; sequence HRNSSRHRSR. The disordered stretch occupies residues 1454–1482; that stretch reads HRNSSRHRSRSQIAALKEETEEEVQETRL. S1458 is subject to Phosphoserine. Acidic residues predominate over residues 1472–1482; the sequence is ETEEEVQETRL. The PDZ-binding motif lies at 1480 to 1482; that stretch reads TRL.

This sequence belongs to the ABC transporter superfamily. ABCC family. CFTR transporter (TC 3.A.1.202) subfamily. As to quaternary structure, monomer; does not require oligomerization for channel activity. May form oligomers in the membrane. Interacts with SLC26A3, SLC26A6 and NHERF1. Interacts with SHANK2. Interacts with MYO6. Interacts (via C-terminus) with GOPC (via PDZ domain); this promotes CFTR internalization and thereby decreases channel activity. Interacts with SLC4A7 through NHERF1. Found in a complex with MYO5B and RAB11A. Interacts with ANO1. Interacts with SLC26A8. Interacts with AHCYL1; the interaction increases CFTR activity. Interacts with CSE1L. The core-glycosylated form interacts with GORASP2 (via PDZ GRASP-type 1 domain) in respone to ER stress. Interacts with MARCHF2; the interaction leads to CFTR ubiqtuitination and degradation. Interacts with ADGRG2. Post-translationally, N-glycosylated. In terms of processing, phosphorylated; cAMP treatment promotes phosphorylation and activates the channel. Dephosphorylation decreases the ATPase activity (in vitro). Phosphorylation at PKA sites activates the channel. Phosphorylation at PKC sites enhances the response to phosphorylation by PKA. Phosphorylated by AMPK; this inhibits channel activity. Ubiquitinated, leading to its degradation in the lysosome. Deubiquitination by USP10 in early endosomes enhances its endocytic recycling to the cell membrane. Ubiquitinated by RNF185 during ER stress. Ubiquitinated by MARCHF2.

It is found in the apical cell membrane. The protein localises to the early endosome membrane. It localises to the cell membrane. The protein resides in the recycling endosome membrane. Its subcellular location is the endoplasmic reticulum membrane. It is found in the nucleus. It catalyses the reaction ATP + H2O + closed Cl(-) channel = ADP + phosphate + open Cl(-) channel.. It carries out the reaction chloride(in) = chloride(out). The enzyme catalyses hydrogencarbonate(in) = hydrogencarbonate(out). The catalysed reaction is ATP + H2O = ADP + phosphate + H(+). Its function is as follows. Epithelial ion channel that plays an important role in the regulation of epithelial ion and water transport and fluid homeostasis. Mediates the transport of chloride ions across the cell membrane. Possesses an intrinsic ATPase activity and utilizes ATP to gate its channel; the passive flow of anions through the channel is gated by cycles of ATP binding and hydrolysis by the ATP-binding domains. The ion channel is also permeable to HCO(3)(-); selectivity depends on the extracellular chloride concentration. Exerts its function also by modulating the activity of other ion channels and transporters. Contributes to the regulation of the pH and the ion content of the epithelial fluid layer. Modulates the activity of the epithelial sodium channel (ENaC) complex, in part by regulating the cell surface expression of the ENaC complex. May regulate bicarbonate secretion and salvage in epithelial cells by regulating the transporter SLC4A7. Can inhibit the chloride channel activity of ANO1. Plays a role in the chloride and bicarbonate homeostasis during sperm epididymal maturation and capacitation. The chain is Cystic fibrosis transmembrane conductance regulator from Loxodonta africana (African elephant).